Here is a 634-residue protein sequence, read N- to C-terminus: Phototropic-responsive NPH3 family protein NPY2 (634 aa).

The BTB domain maps to 29–97 (SDISVDVEGS…CYGMTVTLSA (69 aa)). One can recognise an NPH3 domain in the interval 207-488 (DWWVEDLCEL…VQVLFFEQVR (282 aa)). Y429 is subject to Phosphotyrosine. Disordered regions lie at residues 492-517 (SSGSSTPDLPRGMGRELRSCGTYGSS) and 584-634 (QLQS…VSVS). Residues 588–602 (KGGGEKNNGGGGGGS) are compositionally biased toward gly residues. Residues 619-634 (KTATPSRNLTRRVSVS) show a composition bias toward polar residues.

This sequence belongs to the NPH3 family. As to expression, specifically expressed in the hypophysis and the root meristems in the embryos. Highly expressed in primary root tips and radicles.

It is found in the cell membrane. The protein localises to the cytoplasm. The protein resides in the cytosol. The protein operates within protein modification; protein ubiquitination. In terms of biological role, may act as a substrate-specific adapter of an E3 ubiquitin-protein ligase complex (CUL3-RBX1-BTB) which mediates the ubiquitination and subsequent proteasomal degradation of target proteins. Plays an essential role in auxin-mediated organogenesis and in root gravitropic responses through the control of PIN proteins (e.g. PIN1 and PIN2) polarity in the root tip endodermal cell layer and in shoot epidermis. Recruited to the plasma membrane by PINs (e.g. PIN1 and PIN2) and, in concert with AGC kinases-mediated (e.g. D6PK and PID) PINs phosphorylation, maintains their polarity through limiting lateral diffusion-based escape. The polypeptide is Phototropic-responsive NPH3 family protein NPY2 (Arabidopsis thaliana (Mouse-ear cress)).